The primary structure comprises 107 residues: Small ribosomal subunit protein bS16 (107 aa).

The segment at 85–107 is disordered; that stretch reads REARNNPEKAVPRKERKAAEAGK.

The protein belongs to the bacterial ribosomal protein bS16 family.

The protein is Small ribosomal subunit protein bS16 of Rhodopseudomonas palustris (strain BisB5).